The primary structure comprises 379 residues: Cytochrome b (379 aa).

The next 4 helical transmembrane spans lie at 33–53, 77–98, 113–133, and 178–198; these read FGSLLGMCLVIQILTGLFLAM, WLIRYLHANGASMFFICLFIHV, WNIGIILLLTTMATAFVGYVL, and FFAFHFILPFIIAAFALVHLL. Histidine 83 and histidine 97 together coordinate heme b. 2 residues coordinate heme b: histidine 182 and histidine 196. Histidine 201 lines the a ubiquinone pocket. 4 helical membrane-spanning segments follow: residues 226–246, 288–308, 320–340, and 347–367; these read TKDLLGIFLLLLVLMILALFF, LGGVLALVLSILILAAFPLLN, VTQVIYWIFIANLLVLTWIGG, and FTTIGQIASVTYFATIIILIP.

It belongs to the cytochrome b family. In terms of assembly, the cytochrome bc1 complex contains 11 subunits: 3 respiratory subunits (MT-CYB, CYC1 and UQCRFS1), 2 core proteins (UQCRC1 and UQCRC2) and 6 low-molecular weight proteins (UQCRH/QCR6, UQCRB/QCR7, UQCRQ/QCR8, UQCR10/QCR9, UQCR11/QCR10 and a cleavage product of UQCRFS1). This cytochrome bc1 complex then forms a dimer. The cofactor is heme b.

The protein localises to the mitochondrion inner membrane. Its function is as follows. Component of the ubiquinol-cytochrome c reductase complex (complex III or cytochrome b-c1 complex) that is part of the mitochondrial respiratory chain. The b-c1 complex mediates electron transfer from ubiquinol to cytochrome c. Contributes to the generation of a proton gradient across the mitochondrial membrane that is then used for ATP synthesis. In Akodon montensis (Montane grass mouse), this protein is Cytochrome b (MT-CYB).